The sequence spans 1297 residues: Probable bifunctional E2/E3 enzyme R795 (1297 aa).

The RING-type; atypical zinc finger occupies 74 to 128 (CAICRYQENEPCIEHKSSESNTKCPIAQSVSCSHSFHACCISRWLHTKKTCPLCN). Positions 678-750 (EPLQEFLCPI…RDWKENNTVI (73 aa)) constitute a U-box domain. One can recognise a VWFA domain in the interval 899-1082 (EMTLEIHSSN…LDIMELETMI (184 aa)). The region spanning 1133–1279 (QKLIRVQREI…IIDYVNKFAL (147 aa)) is the UBC core domain. The active-site Glycyl thioester intermediate is cysteine 1217.

In the C-terminal section; belongs to the ubiquitin-conjugating enzyme family.

It catalyses the reaction S-ubiquitinyl-[E2 ubiquitin-conjugating enzyme]-L-cysteine + [acceptor protein]-L-lysine = [E2 ubiquitin-conjugating enzyme]-L-cysteine + N(6)-ubiquitinyl-[acceptor protein]-L-lysine.. The catalysed reaction is S-ubiquitinyl-[E1 ubiquitin-activating enzyme]-L-cysteine + [E2 ubiquitin-conjugating enzyme]-L-cysteine = [E1 ubiquitin-activating enzyme]-L-cysteine + S-ubiquitinyl-[E2 ubiquitin-conjugating enzyme]-L-cysteine.. Its pathway is protein modification; protein ubiquitination. Its function is as follows. Catalyzes the covalent attachment of ubiquitin to other proteins. Also acts as an E3 ubiquitin-protein ligase. In Acanthamoeba polyphaga (Amoeba), this protein is Probable bifunctional E2/E3 enzyme R795.